A 484-amino-acid polypeptide reads, in one-letter code: Signal transduction histidine-protein kinase/phosphatase MprB (484 aa).

Over residues 1 to 10 the composition is skewed to low complexity; that stretch reads MAADNAGRWP. The tract at residues 1–23 is disordered; sequence MAADNAGRWPGQPPGPPAPTHPA. Residues 1–31 are Cytoplasmic-facing; sequence MAADNAGRWPGQPPGPPAPTHPASSVSLRWR. Over residues 11–20 the composition is skewed to pro residues; the sequence is GQPPGPPAPT. The helical transmembrane segment at 32-52 threads the bilayer; that stretch reads VMLLAMSMVVISVVLMAVAVF. The Extracellular segment spans residues 53–172; it reads AVTSRALYDD…TGKVLKRLGT (120 aa). The chain crosses the membrane as a helical span at residues 173-193; sequence VLLIVGGLGVAVAAIAGGMVA. In terms of domain architecture, HAMP spans 194-246; the sequence is SAGLRPVGRLTQAAERVARTDDLRPIPVIGNDELARLTETFNMMLRALAESRE. Over 194–484 the chain is Cytoplasmic; that stretch reads SAGLRPVGRL…SPAGSDEAER (291 aa). One can recognise a Histidine kinase domain in the interval 254 to 474; sequence DAGHELRTPL…AMHVVLPGRP (221 aa). His257 is modified (phosphohistidine; by autocatalysis).

Requires Mg(2+) as cofactor. It depends on Mn(2+) as a cofactor. In terms of processing, autophosphorylated.

It localises to the cell membrane. The catalysed reaction is ATP + protein L-histidine = ADP + protein N-phospho-L-histidine.. Member of the two-component regulatory system MprB/MprA which contributes to maintaining a balance among several systems involved in stress resistance and is required for establishment and maintenance of persistent infection in the host. In response to environmental signals MprB acts both as a membrane-associated protein kinase that undergoes autophosphorylation and subsequently transfers the phosphate to MprA, and a protein phosphatase that dephosphorylates phospho-MprA. The polypeptide is Signal transduction histidine-protein kinase/phosphatase MprB (mprB) (Mycolicibacterium vanbaalenii (strain DSM 7251 / JCM 13017 / BCRC 16820 / KCTC 9966 / NRRL B-24157 / PYR-1) (Mycobacterium vanbaalenii)).